A 338-amino-acid polypeptide reads, in one-letter code: Glycerol-3-phosphate dehydrogenase [NAD(P)+] (338 aa).

The NADPH site is built by Ser11, Trp12, His32, Arg33, and Lys106. Residues Lys106, Gly137, and Ser139 each contribute to the sn-glycerol 3-phosphate site. Position 141 (Ala141) interacts with NADPH. Residues Lys192, Asp245, Ser255, Arg256, and Asn257 each coordinate sn-glycerol 3-phosphate. The Proton acceptor role is filled by Lys192. NADPH is bound at residue Arg256. Residues Val280 and Glu282 each contribute to the NADPH site.

This sequence belongs to the NAD-dependent glycerol-3-phosphate dehydrogenase family.

It is found in the cytoplasm. The catalysed reaction is sn-glycerol 3-phosphate + NAD(+) = dihydroxyacetone phosphate + NADH + H(+). The enzyme catalyses sn-glycerol 3-phosphate + NADP(+) = dihydroxyacetone phosphate + NADPH + H(+). The protein operates within membrane lipid metabolism; glycerophospholipid metabolism. Its function is as follows. Catalyzes the reduction of the glycolytic intermediate dihydroxyacetone phosphate (DHAP) to sn-glycerol 3-phosphate (G3P), the key precursor for phospholipid synthesis. This Lysinibacillus sphaericus (strain C3-41) protein is Glycerol-3-phosphate dehydrogenase [NAD(P)+].